The sequence spans 109 residues: Aquaporin-2 (109 aa).

Over 1-6 the chain is Cytoplasmic; sequence SIAFSR. A helical membrane pass occupies residues 7–27; sequence AVLSEFLATLLFVFFGLGSAL. The Extracellular segment spans residues 28–35; the sequence is NWPQALPS. A helical membrane pass occupies residues 36–54; the sequence is VLQIAMAFGLAIGTLVQTL. Residues 55–59 lie on the Cytoplasmic side of the membrane; sequence GHISG. The discontinuously helical intramembrane region spans 60–69; the sequence is AHINPAVTIA. Positions 63-65 match the NPA 1 motif; that stretch reads NPA. Over 70–80 the chain is Cytoplasmic; the sequence is CLVGCHVSFLR. A helical transmembrane segment spans residues 81-102; sequence ALFYLAAQLLGAVAGAALLHEL. Residues 103–109 lie on the Extracellular side of the membrane; the sequence is TPPDIRG.

It belongs to the MIP/aquaporin (TC 1.A.8) family. In terms of assembly, homotetramer. In terms of processing, serine phosphorylation is necessary and sufficient for expression at the apical membrane. Endocytosis is not phosphorylation-dependent. Post-translationally, N-glycosylated.

The protein resides in the apical cell membrane. It localises to the basolateral cell membrane. The protein localises to the cell membrane. It is found in the cytoplasmic vesicle membrane. Its subcellular location is the golgi apparatus. The protein resides in the trans-Golgi network membrane. The catalysed reaction is H2O(in) = H2O(out). The enzyme catalyses glycerol(in) = glycerol(out). In terms of biological role, forms a water-specific channel that provides the plasma membranes of renal collecting duct with high permeability to water, thereby permitting water to move in the direction of an osmotic gradient. Plays an essential role in renal water homeostasis. Could also be permeable to glycerol. The sequence is that of Aquaporin-2 from Procavia capensis habessinica (Abyssinian hyrax).